A 202-amino-acid chain; its full sequence is Adenosylcobalamin/alpha-ribazole phosphatase (202 aa).

His-8 functions as the Tele-phosphohistidine intermediate in the catalytic mechanism. Glu-81 acts as the Proton donor/acceptor in catalysis.

The protein belongs to the phosphoglycerate mutase family.

The enzyme catalyses adenosylcob(III)alamin 5'-phosphate + H2O = adenosylcob(III)alamin + phosphate. It carries out the reaction alpha-ribazole 5'-phosphate + H2O = alpha-ribazole + phosphate. It functions in the pathway nucleoside biosynthesis; alpha-ribazole biosynthesis; alpha-ribazole from 5,6-dimethylbenzimidazole: step 2/2. Its function is as follows. Catalyzes the conversion of adenosylcobalamin 5'-phosphate to adenosylcobalamin (vitamin B12); involved in the assembly of the nucleotide loop of cobalamin. Also catalyzes the hydrolysis of the phospho group from alpha-ribazole 5'-phosphate to form alpha-ribazole. In Salmonella typhi, this protein is Adenosylcobalamin/alpha-ribazole phosphatase (cobC).